We begin with the raw amino-acid sequence, 437 residues long: Dolichyl-diphosphooligosaccharide--protein glycosyltransferase 48 kDa subunit (437 aa).

The first 24 residues, 1-24, serve as a signal peptide directing secretion; sequence MVNLSRSVALISVFLLPLLSFSFS. The Lumenal portion of the chain corresponds to 25-414; sequence VDNPTDRRVL…YERFIPTAYP (390 aa). The chain crosses the membrane as a helical span at residues 415 to 435; it reads YYGACFTTMAGFFVFSFVYLY. Topologically, residues 436 to 437 are cytoplasmic; that stretch reads HK.

This sequence belongs to the DDOST 48 kDa subunit family. Component of the oligosaccharyltransferase (OST) complex.

The protein localises to the endoplasmic reticulum membrane. The protein operates within protein modification; protein glycosylation. In terms of biological role, subunit of the oligosaccharyl transferase (OST) complex that catalyzes the initial transfer of a defined glycan (Glc(3)Man(9)GlcNAc(2) in eukaryotes) from the lipid carrier dolichol-pyrophosphate to an asparagine residue within an Asn-X-Ser/Thr consensus motif in nascent polypeptide chains, the first step in protein N-glycosylation. N-glycosylation occurs cotranslationally and the complex associates with the Sec61 complex at the channel-forming translocon complex that mediates protein translocation across the endoplasmic reticulum (ER). All subunits are required for a maximal enzyme activity. The polypeptide is Dolichyl-diphosphooligosaccharide--protein glycosyltransferase 48 kDa subunit (OST48) (Arabidopsis thaliana (Mouse-ear cress)).